An 89-amino-acid polypeptide reads, in one-letter code: Small ribosomal subunit protein uS15 (89 aa).

It belongs to the universal ribosomal protein uS15 family. Part of the 30S ribosomal subunit. Forms a bridge to the 50S subunit in the 70S ribosome, contacting the 23S rRNA.

One of the primary rRNA binding proteins, it binds directly to 16S rRNA where it helps nucleate assembly of the platform of the 30S subunit by binding and bridging several RNA helices of the 16S rRNA. Functionally, forms an intersubunit bridge (bridge B4) with the 23S rRNA of the 50S subunit in the ribosome. This chain is Small ribosomal subunit protein uS15, found in Pseudomonas savastanoi pv. phaseolicola (strain 1448A / Race 6) (Pseudomonas syringae pv. phaseolicola (strain 1448A / Race 6)).